A 322-amino-acid chain; its full sequence is Putative membrane-bound redox modulator Alx (322 aa).

The Periplasmic portion of the chain corresponds to 1 to 6 (MNTVGT). Residues 7-27 (PLLWGGFAVVVVIMLSIDLLL) traverse the membrane as a helical segment. Residues 28–43 (QGRRGAHAMSMKQAAG) lie on the Cytoplasmic side of the membrane. A helical membrane pass occupies residues 44–64 (WSILWVTLSLLFNAAFWWYLA). Residues 65-89 (ETQGREVADPQALAFLTGYLIEKSL) are Periplasmic-facing. A helical membrane pass occupies residues 90–110 (AVDNVFVWLMLFSYFSVPPAL). Residues 111 to 113 (QRR) are Cytoplasmic-facing. Residues 114 to 134 (VLVYGVLGAIVLRTIMIFAGT) traverse the membrane as a helical segment. A topological domain (periplasmic) is located at residue W135. A helical transmembrane segment spans residues 136–156 (LITQFEWLLYVFGAFLLFTGV). Topologically, residues 157–198 (KMALAKEDESGIGEKPMVRWLRGHLRMTDTIENEHFFVRKNG) are cytoplasmic. Residues 199-219 (LLYATPLLLVLIMVEFSDVIF) form a helical membrane-spanning segment. The Periplasmic portion of the chain corresponds to 220–225 (AVDSIP). A helical membrane pass occupies residues 226–246 (AIFAVTTDPFIVLTSNLFAIL). Residues 247 to 261 (GLRAMYFLLSGVAER) are Cytoplasmic-facing. Residues 262 to 282 (FSMLKYGLAVILVFIGIKMLI) form a helical membrane-spanning segment. The Periplasmic segment spans residues 283 to 286 (VDFY). Residues 287–307 (HIPIAISLGVVFGILTITLVI) traverse the membrane as a helical segment. Residues 308–321 (NTWVNHQRDKKLRA) lie on the Cytoplasmic side of the membrane.

It belongs to the TerC family.

The protein resides in the cell inner membrane. Its function is as follows. Has been proposed to be a redox modulator. The protein is Putative membrane-bound redox modulator Alx (alx) of Salmonella typhi.